Consider the following 100-residue polypeptide: MLALNNYLILSAILFSIGTIGVLVRRNAIVIFMCVEMMLNAVNLTFIAFSKYLGNIDGQIFVFFVMTVAAAEAAVGLALMIAFYKNRESIDVEDVNLMKW.

The next 3 helical transmembrane spans lie at 4–24 (LNNYLILSAILFSIGTIGVLV), 29–49 (IVIFMCVEMMLNAVNLTFIAF), and 60–80 (IFVFFVMTVAAAEAAVGLALM).

The protein belongs to the complex I subunit 4L family. As to quaternary structure, NDH-1 is composed of 14 different subunits. Subunits NuoA, H, J, K, L, M, N constitute the membrane sector of the complex.

The protein resides in the cell inner membrane. It catalyses the reaction a quinone + NADH + 5 H(+)(in) = a quinol + NAD(+) + 4 H(+)(out). NDH-1 shuttles electrons from NADH, via FMN and iron-sulfur (Fe-S) centers, to quinones in the respiratory chain. The immediate electron acceptor for the enzyme in this species is believed to be ubiquinone. Couples the redox reaction to proton translocation (for every two electrons transferred, four hydrogen ions are translocated across the cytoplasmic membrane), and thus conserves the redox energy in a proton gradient. The chain is NADH-quinone oxidoreductase subunit K 2 from Geotalea uraniireducens (strain Rf4) (Geobacter uraniireducens).